The primary structure comprises 983 residues: Eukaryotic translation initiation factor 4E transporter (983 aa).

The segment at 1 to 22 (MEKSVAETENGDAFLELKKLPT) is disordered. Serine 4 is modified (phosphoserine). The YXXXXLphi motif signature appears at 29-35 (YTKEELL). Residues 40-99 (RPYSKQRPSCLSEKYDSDGVWDPEKWHASLYPASGRSSPVESLKKESESDRPSLVRRIAD) are disordered. Residues 52-66 (EKYDSDGVWDPEKWH) show a composition bias toward basic and acidic residues. Serine 73 and serine 77 each carry phosphoserine. Positions 81–99 (SLKKESESDRPSLVRRIAD) are enriched in basic and acidic residues. Residues serine 114, serine 119, serine 135, and serine 137 each carry the phosphoserine modification. Residues 130-160 (VSSRRSGSPLEKDSDGLRLLGGRRIGSGRII) form an interaction with CSDE1 region. The Nuclear localization signal motif lies at 194-210 (RREFGDSKRVFGERRRN). The segment at 206-229 (ERRRNDSYTEEEPEWFSAGPTSQS) is disordered. Residues 218–239 (PEWFSAGPTSQSETIELTGFDD) form an interaction with DDX6 region. 4 positions are modified to phosphoserine: serine 300, serine 344, serine 352, and serine 373. The disordered stretch occupies residues 341 to 360 (SNPSRSGSRSSSLGSTPHEE). The segment covering 344–355 (SRSGSRSSSLGS) has biased composition (low complexity). A Glycyl lysine isopeptide (Lys-Gly) (interchain with G-Cter in SUMO2) cross-link involves residue lysine 409. Serine 416 bears the Phosphoserine mark. Residues 437 to 446 (VEAGLKGLKV) carry the Nuclear export signal motif. An interaction with LSM14A region spans residues 447–489 (DQQMKNSTPFMAEHLEETLSAASSNRQLKKDGDMTAFNKLVNT). Lysine 485 is modified (N6-acetyllysine). Phosphoserine occurs at positions 563 and 586. Disordered stretches follow at residues 585–616 (PSPIGFPSGPQQLLGDPFQGMRKPMSPVSAQM), 642–693 (FYQP…MLSP), 708–800 (REKT…VPGT), and 906–951 (LHPP…SSPV). The Nuclear export signal motif lies at 612 to 637 (VSAQMSQLELQQAALEGLALPHDLAV). The segment covering 651–660 (QVDRTRDGLR) has biased composition (basic and acidic residues). Residue serine 692 is modified to Phosphoserine. The interval 694 to 712 (SFTPTSVIRKMYESREKTK) is interaction with PATL1. The span at 724 to 734 (DGKEDTQKTSE) shows a compositional bias: basic and acidic residues. Polar residues-rich tracts occupy residues 735–774 (ENLLSSNPIPNTDQDSSTTNPKLSTLQRSSCSTPLSQTSR) and 910–928 (GSSSQAAAISVQTPQNVPS). Residues serine 751, serine 919, and serine 949 each carry the phosphoserine modification. Residues 938–983 (QLEHRTSQRSSSPVGLAKWFGSDVLQQPLPSMPTKVISVDELEYRQ) form an interaction with LSM14A region.

This sequence belongs to the 4E-T/EIF4E-T family. As to quaternary structure, interacts (via YXXXXLphi motif) with EIF4E. Interacts (via YXXXXLphi motif) with EIF4E2. Interacts with DDX6. Interacts with CSDE1/UNR. Interacts with CNOT1; promoting association with the CCR4-NOT complex. Interacts with LSM14A; promoting EIF4ENIF1 localization to P-bodies. Interacts with PATL1. Interacts with importin beta only in the presence of importin alpha, suggesting a direct interaction with importin alpha. Interacts with APOBEC3G in an RNA-dependent manner. In terms of processing, phosphorylation by MAPK8/JNK1 and or MAPK9/JNK2 in response to oxidative stress promotes P-body assembly. Phosphorylated during meiotic maturation. As to expression, highly expressed in developing oocytes.

Its subcellular location is the cytoplasm. It is found in the nucleus. The protein localises to the PML body. The protein resides in the nucleus speckle. In terms of biological role, EIF4E-binding protein that regulates translation and stability of mRNAs in processing bodies (P-bodies). Plays a key role in P-bodies to coordinate the storage of translationally inactive mRNAs in the cytoplasm and prevent their degradation. Acts as a binding platform for multiple RNA-binding proteins: promotes deadenylation of mRNAs via its interaction with the CCR4-NOT complex, and blocks decapping via interaction with eIF4E (EIF4E and EIF4E2), thereby protecting deadenylated and repressed mRNAs from degradation. Component of a multiprotein complex that sequesters and represses translation of proneurogenic factors during neurogenesis. Promotes miRNA-mediated translational repression. Involved in mRNA translational repression mediated by the miRNA effector TNRC6B by protecting TNRC6B-targeted mRNAs from decapping and subsequent decay. Required for the formation of P-bodies. Also acts as a nucleoplasmic shuttling protein, which mediates the nuclear import of EIF4E and DDX6 by a piggy-back mechanism. The protein is Eukaryotic translation initiation factor 4E transporter of Mus musculus (Mouse).